We begin with the raw amino-acid sequence, 74 residues long: Large ribosomal subunit protein bL31 (74 aa).

It belongs to the bacterial ribosomal protein bL31 family. Type A subfamily. In terms of assembly, part of the 50S ribosomal subunit.

Binds the 23S rRNA. The protein is Large ribosomal subunit protein bL31 of Chlorobaculum parvum (strain DSM 263 / NCIMB 8327) (Chlorobium vibrioforme subsp. thiosulfatophilum).